The following is a 406-amino-acid chain: Tryptophan synthase beta chain (406 aa).

Lys-95 bears the N6-(pyridoxal phosphate)lysine mark.

It belongs to the TrpB family. Tetramer of two alpha and two beta chains. It depends on pyridoxal 5'-phosphate as a cofactor.

It carries out the reaction (1S,2R)-1-C-(indol-3-yl)glycerol 3-phosphate + L-serine = D-glyceraldehyde 3-phosphate + L-tryptophan + H2O. It functions in the pathway amino-acid biosynthesis; L-tryptophan biosynthesis; L-tryptophan from chorismate: step 5/5. Its function is as follows. The beta subunit is responsible for the synthesis of L-tryptophan from indole and L-serine. This Pseudomonas fluorescens (strain ATCC BAA-477 / NRRL B-23932 / Pf-5) protein is Tryptophan synthase beta chain.